Here is a 468-residue protein sequence, read N- to C-terminus: Tapasin-related protein (468 aa).

A signal peptide spans 1–18; sequence MGTQEGWCLLLCLALSGA. At 19 to 405 the chain is on the lumenal side; it reads AETKPHPAEG…STQVVPPERR (387 aa). Positions 181 to 297 constitute an Ig-like V-type domain; the sequence is PQGTVRTAVE…SLYRAQQIIQ (117 aa). Disulfide bonds link C212–C283 and C321–C382. One can recognise an Ig-like C1-type domain in the interval 304–394; it reads PKVRLSLANE…THISLEEPLG (91 aa). The chain crosses the membrane as a helical span at residues 406–426; sequence TALGVIFASSLFLLALMFLGL. Residues 427-468 are Cytoplasmic-facing; that stretch reads QRRQAPTGLGLLQAERWETTSCADTQSSHLHEDRTARVSQPS. The interval 449-468 is disordered; it reads ADTQSSHLHEDRTARVSQPS.

In terms of assembly, interacts with peptide-free HLA-A*02-B2M complexes or those loaded with low affinity peptides, likely facilitating peptide exchange onto higher affinity peptides. Interacts with MR1 in a ligand-independent way; this interaction may stabilize MR1 pool and facilitate ligand loading and dissociation.

It localises to the cell membrane. Its subcellular location is the endoplasmic reticulum membrane. It is found in the microsome membrane. The protein resides in the golgi apparatus membrane. Component of the antigen processing and presentation pathway, which binds to MHC class I coupled with beta2-microglobulin/B2M. Association between TAPBPR and MHC class I occurs in the absence of a functional peptide-loading complex (PLC). This Homo sapiens (Human) protein is Tapasin-related protein (TAPBPL).